Here is a 21-residue protein sequence, read N- to C-terminus: Cutinase 2 (21 aa).

This sequence belongs to the cutinase family.

Its subcellular location is the secreted. The catalysed reaction is cutin + H2O = cutin monomers.. Inhibited by diisopropyl fluorophosphate (DFP). In terms of biological role, catalyzes the hydrolysis of complex carboxylic polyesters found in the cell wall of plants. Degrades cutin, a macromolecule that forms the structure of the plant cuticle. Allows pathogenic fungi to penetrate through the cuticular barrier into the host plant during the initial stage of fungal infection. This chain is Cutinase 2, found in Colletotrichum gloeosporioides (Anthracnose fungus).